Here is a 1072-residue protein sequence, read N- to C-terminus: Carbamoyl phosphate synthase large chain (1072 aa).

Residues 1–401 (MPKRLDINTI…SLLKAVRSLE (401 aa)) form a carboxyphosphate synthetic domain region. Arginine 129, arginine 169, glycine 175, glycine 176, lysine 208, isoleucine 210, glutamate 215, glycine 241, valine 242, histidine 243, glutamine 284, and glutamate 298 together coordinate ATP. An ATP-grasp 1 domain is found at 133 to 327 (RTLMQELNEP…IAKLAAKIAV (195 aa)). Mg(2+)-binding residues include glutamine 284, glutamate 298, and asparagine 300. Mn(2+) contacts are provided by glutamine 284, glutamate 298, and asparagine 300. The interval 402 to 546 (LGIYHLELDH…YSTYADENEL (145 aa)) is oligomerization domain. A carbamoyl phosphate synthetic domain region spans residues 547–929 (IVTDRKSVVV…ALYKGLVASG (383 aa)). Positions 671-861 (EAALTKLGIP…MANVATKVIL (191 aa)) constitute an ATP-grasp 2 domain. 9 residues coordinate ATP: arginine 707, arginine 746, glutamate 752, glycine 777, valine 778, histidine 779, serine 780, glutamine 820, and glutamate 832. Glutamine 820, glutamate 832, and asparagine 834 together coordinate Mg(2+). The Mn(2+) site is built by glutamine 820, glutamate 832, and asparagine 834. Positions 930–1072 (INIPTHGSVI…QTKRHEVVHA (143 aa)) constitute an MGS-like domain. The allosteric domain stretch occupies residues 930 to 1072 (INIPTHGSVI…QTKRHEVVHA (143 aa)).

The protein belongs to the CarB family. As to quaternary structure, composed of two chains; the small (or glutamine) chain promotes the hydrolysis of glutamine to ammonia, which is used by the large (or ammonia) chain to synthesize carbamoyl phosphate. Tetramer of heterodimers (alpha,beta)4. Mg(2+) is required as a cofactor. It depends on Mn(2+) as a cofactor.

The enzyme catalyses hydrogencarbonate + L-glutamine + 2 ATP + H2O = carbamoyl phosphate + L-glutamate + 2 ADP + phosphate + 2 H(+). It catalyses the reaction hydrogencarbonate + NH4(+) + 2 ATP = carbamoyl phosphate + 2 ADP + phosphate + 2 H(+). The protein operates within amino-acid biosynthesis; L-arginine biosynthesis; carbamoyl phosphate from bicarbonate: step 1/1. It functions in the pathway pyrimidine metabolism; UMP biosynthesis via de novo pathway; (S)-dihydroorotate from bicarbonate: step 1/3. Its function is as follows. Large subunit of the glutamine-dependent carbamoyl phosphate synthetase (CPSase). CPSase catalyzes the formation of carbamoyl phosphate from the ammonia moiety of glutamine, carbonate, and phosphate donated by ATP, constituting the first step of 2 biosynthetic pathways, one leading to arginine and/or urea and the other to pyrimidine nucleotides. The large subunit (synthetase) binds the substrates ammonia (free or transferred from glutamine from the small subunit), hydrogencarbonate and ATP and carries out an ATP-coupled ligase reaction, activating hydrogencarbonate by forming carboxy phosphate which reacts with ammonia to form carbamoyl phosphate. This Bacillus anthracis (strain A0248) protein is Carbamoyl phosphate synthase large chain.